Consider the following 501-residue polypeptide: MDENNGLLLLELNPPNPWDLQPRSPEELAFGEVQITYLTHACMDLKLGDKRMVFDPWLIGPAFARGWWLLHEPPSDWLERLCQADLIYISHLHSDHLSYPTLKKLAGRRPDIPIYVGNTERPVFWNLNQSGVQLTNINVVPFGIWQQVDKNLRFMILMDGVHPEMDTCIIVEYKGHKILNIVDCTRPNGGRLPMKVALMMSDFAGGASGFPMTFSGGKFTEEWKAQFIKTERKKLLNYKARLVKNLQPRIYCPFAGYFVESHPSDKYIKETNTKNDPNELNNLIKKNSDVITWTPRPGATLDLGRMLKDRTDSKGIIEPPEGTKIYKDSWDFEPYLEILNAALGDEIFLHSSWIKEYFTWAGFKDYNLVVRMIETDEDFNPFPGGYDYLVDFLDLSFPKERPQREHPYEEIHSRVDVIRHVVKNGLLWDELYIGFQTRLQRDPDIYHHLFWNHFQIKLPLTPPNWKSFLMCCEQNGPVILQFSTERTNEPNRNKFSVENKA.

It belongs to the CMP-Neu5Ac hydroxylase family. In terms of tissue distribution, widely expressed. Highly expressed in thymus. Not expressed in brain. May be expressed in adult stem cells (at protein level).

The protein resides in the cytoplasm. Functionally, sialic acids are components of carbohydrate chains of glycoconjugates and are involved in cell-cell recognition and cell-pathogen interactions. That protein has no CMP-N-acetylneuraminate monooxygenase activity and is not able to convert CMP-N-acetylneuraminic acid (CMP-Neu5Ac) into its hydroxylated derivative CMP-N-glycolylneuraminic acid (CMP-Neu5Gc), a sialic acid abundantly expressed at the surface of many cells in vertebrates. However, it may play a role in Wnt signaling. This chain is Inactive cytidine monophosphate-N-acetylneuraminic acid hydroxylase (CMAHP), found in Homo sapiens (Human).